Reading from the N-terminus, the 294-residue chain is ATP synthase gamma chain (294 aa).

It belongs to the ATPase gamma chain family. In terms of assembly, F-type ATPases have 2 components, CF(1) - the catalytic core - and CF(0) - the membrane proton channel. CF(1) has five subunits: alpha(3), beta(3), gamma(1), delta(1), epsilon(1). CF(0) has three main subunits: a, b and c.

The protein localises to the cell membrane. In terms of biological role, produces ATP from ADP in the presence of a proton gradient across the membrane. The gamma chain is believed to be important in regulating ATPase activity and the flow of protons through the CF(0) complex. The sequence is that of ATP synthase gamma chain from Opitutus terrae (strain DSM 11246 / JCM 15787 / PB90-1).